Reading from the N-terminus, the 452-residue chain is Activating transcription factor 7-interacting protein 2 (452 aa).

The residue at position 184 (Ser-184) is a Phosphoserine. Residues 185-206 (RSKRISSVNHTPLNSSEKAGRK) form a disordered region. At Ser-257 the chain carries Phosphoserine. In terms of domain architecture, Fibronectin type-III spans 346–450 (PPQKPELKVK…IKSIPRFSEN (105 aa)).

Belongs to the MCAF family. Interacts with MBD1, SETDB1 and SP1. Probably forms a complex with SETDB1 and MBD1. In terms of tissue distribution, expressed in testis.

It is found in the nucleus. In terms of biological role, recruiter that couples transcriptional factors to general transcription apparatus and thereby modulates transcription regulation and chromatin formation. Can both act as an activator or a repressor depending on the context. Mediates MBD1-dependent transcriptional repression, probably by recruiting complexes containing SETDB1. The complex formed with MBD1 and SETDB1 represses transcription and probably couples DNA methylation and histone H3 'Lys-9' trimethylation (H3K9me3) activity. The chain is Activating transcription factor 7-interacting protein 2 (Atf7ip2) from Mus musculus (Mouse).